The primary structure comprises 386 residues: DNA-directed RNA polymerase subunit Rpo1C (386 aa).

The protein belongs to the RNA polymerase beta' chain family. As to quaternary structure, part of the RNA polymerase complex.

It localises to the cytoplasm. It carries out the reaction RNA(n) + a ribonucleoside 5'-triphosphate = RNA(n+1) + diphosphate. Its function is as follows. DNA-dependent RNA polymerase (RNAP) catalyzes the transcription of DNA into RNA using the four ribonucleoside triphosphates as substrates. Forms part of the jaw domain. The sequence is that of DNA-directed RNA polymerase subunit Rpo1C from Methanococcus maripaludis (strain C7 / ATCC BAA-1331).